A 297-amino-acid polypeptide reads, in one-letter code: 4-hydroxy-tetrahydrodipicolinate synthase (297 aa).

T55 lines the pyruvate pocket. The active-site Proton donor/acceptor is Y144. K172 acts as the Schiff-base intermediate with substrate in catalysis. I213 is a pyruvate binding site.

The protein belongs to the DapA family. Homotetramer; dimer of dimers.

It localises to the cytoplasm. The enzyme catalyses L-aspartate 4-semialdehyde + pyruvate = (2S,4S)-4-hydroxy-2,3,4,5-tetrahydrodipicolinate + H2O + H(+). It functions in the pathway amino-acid biosynthesis; L-lysine biosynthesis via DAP pathway; (S)-tetrahydrodipicolinate from L-aspartate: step 3/4. Its function is as follows. Catalyzes the condensation of (S)-aspartate-beta-semialdehyde [(S)-ASA] and pyruvate to 4-hydroxy-tetrahydrodipicolinate (HTPA). This is 4-hydroxy-tetrahydrodipicolinate synthase from Lactococcus lactis subsp. lactis (strain IL1403) (Streptococcus lactis).